Reading from the N-terminus, the 153-residue chain is MPTLFLFGASEGGLFDFDATLPLMAVQVVLLTFILNALFFKPVGRVVEEREDYVNTSRAEAKKKIAEVELLETELKDQLKEARLEAQKVILEAEQDSENLYKEALALATSEANASREKARREIDSQRDEALNQLKNEADNLGDLIIERLLAKK.

The helical transmembrane segment at T20–F40 threads the bilayer.

Belongs to the ATPase B chain family. F-type ATPases have 2 components, F(1) - the catalytic core - and F(0) - the membrane proton channel. F(1) has five subunits: alpha(3), beta(3), gamma(1), delta(1), epsilon(1). F(0) has four main subunits: a(1), b(1), b'(1) and c(10-14). The alpha and beta chains form an alternating ring which encloses part of the gamma chain. F(1) is attached to F(0) by a central stalk formed by the gamma and epsilon chains, while a peripheral stalk is formed by the delta, b and b' chains.

Its subcellular location is the cellular thylakoid membrane. F(1)F(0) ATP synthase produces ATP from ADP in the presence of a proton or sodium gradient. F-type ATPases consist of two structural domains, F(1) containing the extramembraneous catalytic core and F(0) containing the membrane proton channel, linked together by a central stalk and a peripheral stalk. During catalysis, ATP synthesis in the catalytic domain of F(1) is coupled via a rotary mechanism of the central stalk subunits to proton translocation. Its function is as follows. Component of the F(0) channel, it forms part of the peripheral stalk, linking F(1) to F(0). The b'-subunit is a diverged and duplicated form of b found in plants and photosynthetic bacteria. The protein is ATP synthase subunit b' of Prochlorococcus marinus (strain NATL2A).